The following is a 406-amino-acid chain: Calsequestrin-2 (406 aa).

The signal sequence occupies residues 1-19 (MKATCWILAGFCLLFCCKA). The N-linked (GlcNAc...) asparagine glycan is linked to asparagine 335. The disordered stretch occupies residues 365–406 (VLSGKINTEDDDDDDDDDDDDDDDDDDDDDDDDDDDDDDDDD). Acidic residues predominate over residues 373 to 406 (EDDDDDDDDDDDDDDDDDDDDDDDDDDDDDDDDD).

This sequence belongs to the calsequestrin family. In terms of tissue distribution, skeletal and heart muscle.

Its subcellular location is the sarcoplasmic reticulum lumen. Calsequestrin is a high-capacity, moderate affinity, calcium-binding protein and thus acts as an internal calcium store in muscle. Calcium ions are bound by clusters of acidic residues at the protein surface, especially at the interface between subunits. Can bind around 60 Ca(2+) ions. Regulates the release of lumenal Ca(2+) via the calcium release channel RYR2; this plays an important role in triggering muscle contraction. Plays a role in excitation-contraction coupling in the heart and in regulating the rate of heart beats. This chain is Calsequestrin-2 (CASQ2), found in Gallus gallus (Chicken).